A 293-amino-acid polypeptide reads, in one-letter code: Ribosomal protein L11 methyltransferase (293 aa).

Residues T145, G166, D188, and N230 each coordinate S-adenosyl-L-methionine.

Belongs to the methyltransferase superfamily. PrmA family.

It is found in the cytoplasm. The enzyme catalyses L-lysyl-[protein] + 3 S-adenosyl-L-methionine = N(6),N(6),N(6)-trimethyl-L-lysyl-[protein] + 3 S-adenosyl-L-homocysteine + 3 H(+). In terms of biological role, methylates ribosomal protein L11. In Mannheimia succiniciproducens (strain KCTC 0769BP / MBEL55E), this protein is Ribosomal protein L11 methyltransferase.